Consider the following 209-residue polypeptide: Probable phosphatidylglycerophosphatase, mitochondrial (209 aa).

The short motif at 57–61 is the Phosphoryl acceptor element; the sequence is DKDNC.

Belongs to the GEP4 family.

The protein resides in the mitochondrion inner membrane. It carries out the reaction a 1,2-diacyl-sn-glycero-3-phospho-(1'-sn-glycero-3'-phosphate) + H2O = a 1,2-diacyl-sn-glycero-3-phospho-(1'-sn-glycerol) + phosphate. Its pathway is phospholipid metabolism; phosphatidylglycerol biosynthesis; phosphatidylglycerol from CDP-diacylglycerol: step 2/2. In terms of biological role, phosphatidylglycerophosphatase involved in the biosynthesis of cardiolipin (CL), a unique dimeric phosphoglycerolipid predominantly present in mitochondrial membranes and which has important functions for cellular energy metabolism, mitochondrial dynamics and the initiation of apoptotic pathways. The protein is Probable phosphatidylglycerophosphatase, mitochondrial (gep4) of Schizosaccharomyces pombe (strain 972 / ATCC 24843) (Fission yeast).